A 337-amino-acid polypeptide reads, in one-letter code: Transcription initiation factor IIB (337 aa).

Residues 36-68 form a TFIIB-type zinc finger; sequence SVQSVCPECGSRQLVHDYERAELVCQNCGLVLD. The Zn(2+) site is built by C41, C44, C60, and C63. 2 tandem repeats follow at residues 154 to 237 and 248 to 329.

The protein belongs to the TFIIB family.

Stabilizes TBP binding to an archaeal box-A promoter. Also responsible for recruiting RNA polymerase II to the pre-initiation complex (DNA-TBP-TFIIB). This Methanoculleus marisnigri (strain ATCC 35101 / DSM 1498 / JR1) protein is Transcription initiation factor IIB.